The sequence spans 238 residues: Ribonuclease PH (238 aa).

Phosphate-binding positions include Arg86 and 124 to 126 (GTR).

This sequence belongs to the RNase PH family. As to quaternary structure, homohexameric ring arranged as a trimer of dimers.

It catalyses the reaction tRNA(n+1) + phosphate = tRNA(n) + a ribonucleoside 5'-diphosphate. Functionally, phosphorolytic 3'-5' exoribonuclease that plays an important role in tRNA 3'-end maturation. Removes nucleotide residues following the 3'-CCA terminus of tRNAs; can also add nucleotides to the ends of RNA molecules by using nucleoside diphosphates as substrates, but this may not be physiologically important. Probably plays a role in initiation of 16S rRNA degradation (leading to ribosome degradation) during starvation. This Salmonella gallinarum (strain 287/91 / NCTC 13346) protein is Ribonuclease PH.